Consider the following 357-residue polypeptide: O-methyltransferase pgmB (357 aa).

Aspartate 206 contributes to the S-adenosyl-L-methionine binding site. Histidine 256 serves as the catalytic Proton acceptor.

This sequence belongs to the class I-like SAM-binding methyltransferase superfamily. Cation-independent O-methyltransferase family.

The protein operates within pigment biosynthesis. It functions in the pathway secondary metabolite biosynthesis. Its function is as follows. O-methyltransferase; part of the gene cluster that mediates the biosynthesis of pleosporalin A, ascomycone A, as well as a third cryptic naphthoquinone derived pigment, all responsible for the coloration of conidia. Specifically methylates position C-6 of the pgmA product 3-acetonyl-1,6,8-trihydroxy-2-naphthaldehyde to yield fusarubinaldehyde. The pathway begins with the biosynthesis of the cyclized heptaketide 3-acetonyl-1,6,8-trihydroxy-2-naphthaldehyde by the NR-PKS pgmA. The C-6 hydroxyl group is further methylated by the O-methyltransferase pgmB to yield fusarubinaldehyde which is in turn oxidized by the cytochrome P450 monooxygenase pgmC at C-9. The C-1 hydroxyl group is then methylated spontaneously. Although pgmE, pgmD and pgmH are essential for the production of pleosporalin A, it is not the case for the 2 other final products and it remains difficult to assign a specific function to each enzyme. PgmF and pgmG seem not to be involved in pigment biosynthesis although they were regulated by the cluster-specific transcription factor pgmR. The chain is O-methyltransferase pgmB from Aspergillus terreus (strain NIH 2624 / FGSC A1156).